A 64-amino-acid polypeptide reads, in one-letter code: Conotoxin Pn-B01121 (64 aa).

Residues Met1–Ala22 form the signal peptide. A propeptide spanning residues Leu23–Asn48 is cleaved from the precursor. The residue at position 63 (Trp63) is a Tryptophan amide.

Belongs to the conotoxin T superfamily. Post-translationally, contains 2 disulfide bonds that can be either 'C1-C3, C2-C4' or 'C1-C4, C2-C3', since these disulfide connectivities have been observed for conotoxins with cysteine framework V (for examples, see AC P0DQQ7 and AC P81755). Expressed by the venom duct.

The protein resides in the secreted. In Conus pennaceus (Feathered cone), this protein is Conotoxin Pn-B01121.